The sequence spans 292 residues: Fat storage-inducing transmembrane protein 1 (292 aa).

Residues methionine 1–arginine 18 lie on the Lumenal side of the membrane. The helical transmembrane segment at alanine 19–glycine 39 threads the bilayer. The Cytoplasmic portion of the chain corresponds to serine 40 to arginine 54. A helical membrane pass occupies residues leucine 55–asparagine 75. The Lumenal segment spans residues serine 76–serine 94. The chain crosses the membrane as a helical span at residues alanine 95–threonine 115. The Cytoplasmic portion of the chain corresponds to arginine 116–alanine 141. A helical membrane pass occupies residues phenylalanine 142–leucine 162. The Lumenal portion of the chain corresponds to histidine 163 to threonine 187. The active site involves histidine 186. Residues phenylalanine 188–leucine 208 form a helical membrane-spanning segment. The Cytoplasmic portion of the chain corresponds to alanine 209–leucine 220. A helical membrane pass occupies residues valine 221–isoleucine 241. At tyrosine 242–lysine 249 the chain is on the lumenal side. Histidine 244 is a catalytic residue. The chain crosses the membrane as a helical span at residues valine 250–glutamine 270. Over proline 271–asparagine 292 the chain is Cytoplasmic.

It belongs to the FIT family. FIT1 subfamily. Predominantly expressed in skeletal muscle and at lower levels in the heart (at protein level). In the heart, mRNA expression levels do not correlate well with protein levels, suggesting post-transcriptional regulation in this organ.

Its subcellular location is the endoplasmic reticulum membrane. Plays an important role in the formation of lipid droplets (LDs) which are storage organelles at the center of lipid and energy homeostasis. Directly binds to diacylglycerol (DAGs) and triacylglycerol. This chain is Fat storage-inducing transmembrane protein 1, found in Mus musculus (Mouse).